A 421-amino-acid polypeptide reads, in one-letter code: Putative NBPF family member NBPF7 (421 aa).

Positions 87 to 143 (IKSMLREELQFKEEKLAEQLKQAEELRQYKVLVHSQERELIQLREKLREGRDASHSL) form a coiled coil. 3 disordered regions span residues 179-251 (VHKL…KITS), 312-334 (EKEVLQDSPEERVTTSCSDHDVS), and 402-421 (YNSKPSSIPNTTLQGSFTED). Olduvai domains lie at 190–279 (EDEN…NILL) and 280–391 (ENQN…RMSQ). The span at 194–217 (DKTKELDKVQESPAPREEQKAEEK) shows a compositional bias: basic and acidic residues. Over residues 230–243 (TYSNSHGPSDSNPP) the composition is skewed to polar residues. The span at 312–333 (EKEVLQDSPEERVTTSCSDHDV) shows a compositional bias: basic and acidic residues. Polar residues predominate over residues 403–421 (NSKPSSIPNTTLQGSFTED).

It belongs to the NBPF family.

The protein localises to the cytoplasm. This is Putative NBPF family member NBPF7 from Homo sapiens (Human).